The primary structure comprises 183 residues: Dual-action ribosomal maturation protein DarP (183 aa).

Belongs to the DarP family.

It is found in the cytoplasm. In terms of biological role, member of a network of 50S ribosomal subunit biogenesis factors which assembles along the 30S-50S interface, preventing incorrect 23S rRNA structures from forming. Promotes peptidyl transferase center (PTC) maturation. This chain is Dual-action ribosomal maturation protein DarP, found in Klebsiella pneumoniae (strain 342).